We begin with the raw amino-acid sequence, 193 residues long: Proteasome subunit beta 1 (193 aa).

The propeptide at 1–4 is removed in mature form; by autocatalysis; that stretch reads MPGA. Catalysis depends on threonine 5, which acts as the Nucleophile.

The protein belongs to the peptidase T1B family. As to quaternary structure, the 20S proteasome core is composed of 14 alpha and 14 beta subunits that assemble into four stacked heptameric rings, resulting in a barrel-shaped structure. The two inner rings, each composed of seven catalytic beta subunits, are sandwiched by two outer rings, each composed of seven alpha subunits. The catalytic chamber with the active sites is on the inside of the barrel. Has a gated structure, the ends of the cylinder being occluded by the N-termini of the alpha-subunits. Is capped at one or both ends by the proteasome regulatory ATPase, PAN.

The protein localises to the cytoplasm. The enzyme catalyses Cleavage of peptide bonds with very broad specificity.. Its activity is regulated as follows. The formation of the proteasomal ATPase PAN-20S proteasome complex, via the docking of the C-termini of PAN into the intersubunit pockets in the alpha-rings, triggers opening of the gate for substrate entry. Interconversion between the open-gate and close-gate conformations leads to a dynamic regulation of the 20S proteasome proteolysis activity. Its function is as follows. Component of the proteasome core, a large protease complex with broad specificity involved in protein degradation. The protein is Proteasome subunit beta 1 of Cenarchaeum symbiosum (strain A).